Consider the following 452-residue polypeptide: Maltoporin (452 aa).

Positions M1 to A25 are cleaved as a signal peptide.

It belongs to the porin LamB (TC 1.B.3) family. As to quaternary structure, homotrimer formed of three 18-stranded antiparallel beta-barrels, containing three independent channels.

The protein resides in the cell outer membrane. The catalysed reaction is beta-maltose(in) = beta-maltose(out). Functionally, involved in the transport of maltose and maltodextrins. This chain is Maltoporin, found in Salmonella choleraesuis (strain SC-B67).